We begin with the raw amino-acid sequence, 144 residues long: Large ribosomal subunit protein uL14 (144 aa).

This sequence belongs to the universal ribosomal protein uL14 family. Part of the 50S ribosomal subunit. Forms a cluster with proteins L3 and L24e, part of which may contact the 16S rRNA in 2 intersubunit bridges.

In terms of biological role, binds to 23S rRNA. Forms part of two intersubunit bridges in the 70S ribosome. The protein is Large ribosomal subunit protein uL14 of Caldivirga maquilingensis (strain ATCC 700844 / DSM 13496 / JCM 10307 / IC-167).